Consider the following 280-residue polypeptide: Hydroxyethylthiazole kinase (280 aa).

Substrate is bound at residue methionine 50. Residues lysine 125 and threonine 178 each coordinate ATP. Residue glycine 205 coordinates substrate.

Belongs to the Thz kinase family. Mg(2+) is required as a cofactor.

It carries out the reaction 5-(2-hydroxyethyl)-4-methylthiazole + ATP = 4-methyl-5-(2-phosphooxyethyl)-thiazole + ADP + H(+). The protein operates within cofactor biosynthesis; thiamine diphosphate biosynthesis; 4-methyl-5-(2-phosphoethyl)-thiazole from 5-(2-hydroxyethyl)-4-methylthiazole: step 1/1. Catalyzes the phosphorylation of the hydroxyl group of 4-methyl-5-beta-hydroxyethylthiazole (THZ). The chain is Hydroxyethylthiazole kinase from Lacticaseibacillus paracasei (strain ATCC 334 / BCRC 17002 / CCUG 31169 / CIP 107868 / KCTC 3260 / NRRL B-441) (Lactobacillus paracasei).